We begin with the raw amino-acid sequence, 176 residues long: Peptide deformylase 1 (176 aa).

2 residues coordinate Fe cation: C99 and H141. The active site involves E142. H145 provides a ligand contact to Fe cation.

This sequence belongs to the polypeptide deformylase family. Fe(2+) serves as cofactor.

The catalysed reaction is N-terminal N-formyl-L-methionyl-[peptide] + H2O = N-terminal L-methionyl-[peptide] + formate. In terms of biological role, removes the formyl group from the N-terminal Met of newly synthesized proteins. Requires at least a dipeptide for an efficient rate of reaction. N-terminal L-methionine is a prerequisite for activity but the enzyme has broad specificity at other positions. In Nitrosomonas europaea (strain ATCC 19718 / CIP 103999 / KCTC 2705 / NBRC 14298), this protein is Peptide deformylase 1.